Here is a 158-residue protein sequence, read N- to C-terminus: Transcriptional repressor NrdR (158 aa).

A zinc finger lies at 3–34 (CPFCSFPESRVLDSRPADEGNSIRRRRECGEC). Residues 49–139 (LVVVKKDGRR…VYRQFGDIYS (91 aa)) enclose the ATP-cone domain.

Belongs to the NrdR family. It depends on Zn(2+) as a cofactor.

Negatively regulates transcription of bacterial ribonucleotide reductase nrd genes and operons by binding to NrdR-boxes. The chain is Transcriptional repressor NrdR from Desulforamulus reducens (strain ATCC BAA-1160 / DSM 100696 / MI-1) (Desulfotomaculum reducens).